We begin with the raw amino-acid sequence, 599 residues long: MDRIAQSDLSLGFGSSHALPLPHPPRIPIADDSITLQIDSSFRPSSNPMPPVPLQLLEQRFDVTGSCSRVVEEDDEVVGDNDDDDQREEEQFILLGHPMKLKRGRGGNSYSLASSSPCKRFVVDSGIESRRAVVRAWGNQSIEEADPEIHEFMEKEKQRQFRGIELIASENFVCRAVMEALGSHLTNKYSEGMPGARYYTGNQYIDQIEILCQERALAAFGLNHEKWGVNVQPYSCTSANFAVFTGLLMPGERIMGLDSPSGGHMSHGYYTPGGKKVSGASIFFESFPYKVDPRTGYIDYDKLEEKALDYRPKILICGGSSYPRDWEFPRFRHIADKCGAVLMFDMAQISGLVAAKESPNPFDYCDIVTSTTHKSLRGPRGGIIFYKRGLKPKKQSINLNHCESNIQYDFEEKINFSVFPSLQGGPHNNHIAALAIALKQAASPEYKLYMRQVKKNAKALASALISRKCKLITGGTDNHLLLWDLTPLGLTGKVYEKVCEMCHITVNKVAIFSENGVISPGGVRIGSPAMTSRGCLEPEFETMADFLYRAAQIASAAQREHGKLQKEPLKSIYHCKEIADLRNQVEAFATQFAMPAFDM.

Positions 1 to 25 (MDRIAQSDLSLGFGSSHALPLPHPP) are disordered. At lysine 374 the chain carries N6-(pyridoxal phosphate)lysine.

This sequence belongs to the SHMT family. In terms of assembly, homotetramer. Pyridoxal 5'-phosphate serves as cofactor.

Its subcellular location is the cytoplasm. The catalysed reaction is (6R)-5,10-methylene-5,6,7,8-tetrahydrofolate + glycine + H2O = (6S)-5,6,7,8-tetrahydrofolate + L-serine. The protein operates within one-carbon metabolism; tetrahydrofolate interconversion. Catalyzes the interconversion of serine and glycine. This Arabidopsis thaliana (Mouse-ear cress) protein is Serine hydroxymethyltransferase 6 (SHM6).